We begin with the raw amino-acid sequence, 101 residues long: Cell cycle protein GpsB (101 aa).

Residues Leu34 to Arg71 are a coiled coil.

Belongs to the GpsB family. Forms polymers through the coiled coil domains. Interacts with PBP1, MreC and EzrA.

The protein localises to the cytoplasm. In terms of biological role, divisome component that associates with the complex late in its assembly, after the Z-ring is formed, and is dependent on DivIC and PBP2B for its recruitment to the divisome. Together with EzrA, is a key component of the system that regulates PBP1 localization during cell cycle progression. Its main role could be the removal of PBP1 from the cell pole after pole maturation is completed. Also contributes to the recruitment of PBP1 to the division complex. Not essential for septum formation. The polypeptide is Cell cycle protein GpsB (Bacillus pumilus (strain SAFR-032)).